Consider the following 233-residue polypeptide: Large ribosomal subunit protein uL1 (233 aa).

It belongs to the universal ribosomal protein uL1 family. Part of the 50S ribosomal subunit.

Functionally, binds directly to 23S rRNA. The L1 stalk is quite mobile in the ribosome, and is involved in E site tRNA release. Protein L1 is also a translational repressor protein, it controls the translation of the L11 operon by binding to its mRNA. This chain is Large ribosomal subunit protein uL1, found in Shewanella pealeana (strain ATCC 700345 / ANG-SQ1).